The sequence spans 185 residues: Elongation factor P (185 aa).

The protein belongs to the elongation factor P family.

It localises to the cytoplasm. The protein operates within protein biosynthesis; polypeptide chain elongation. In terms of biological role, involved in peptide bond synthesis. Stimulates efficient translation and peptide-bond synthesis on native or reconstituted 70S ribosomes in vitro. Probably functions indirectly by altering the affinity of the ribosome for aminoacyl-tRNA, thus increasing their reactivity as acceptors for peptidyl transferase. The polypeptide is Elongation factor P (Paraburkholderia phymatum (strain DSM 17167 / CIP 108236 / LMG 21445 / STM815) (Burkholderia phymatum)).